A 198-amino-acid polypeptide reads, in one-letter code: Holliday junction branch migration complex subunit RuvA (198 aa).

The domain I stretch occupies residues 1 to 64 (MIAHLRGTLL…EDAIALFGFL (64 aa)). Residues 65-141 (DREEKRLFER…LDDLIAAAPA (77 aa)) are domain II. A flexible linker region spans residues 141–145 (AAGPV). Residues 146–198 (AAGPAAEDVLSALLNLGYQRPAALKAIETAVEKDAAAGEDFDLLFRAALKLIR) are domain III.

The protein belongs to the RuvA family. Homotetramer. Forms an RuvA(8)-RuvB(12)-Holliday junction (HJ) complex. HJ DNA is sandwiched between 2 RuvA tetramers; dsDNA enters through RuvA and exits via RuvB. An RuvB hexamer assembles on each DNA strand where it exits the tetramer. Each RuvB hexamer is contacted by two RuvA subunits (via domain III) on 2 adjacent RuvB subunits; this complex drives branch migration. In the full resolvosome a probable DNA-RuvA(4)-RuvB(12)-RuvC(2) complex forms which resolves the HJ.

The protein resides in the cytoplasm. Functionally, the RuvA-RuvB-RuvC complex processes Holliday junction (HJ) DNA during genetic recombination and DNA repair, while the RuvA-RuvB complex plays an important role in the rescue of blocked DNA replication forks via replication fork reversal (RFR). RuvA specifically binds to HJ cruciform DNA, conferring on it an open structure. The RuvB hexamer acts as an ATP-dependent pump, pulling dsDNA into and through the RuvAB complex. HJ branch migration allows RuvC to scan DNA until it finds its consensus sequence, where it cleaves and resolves the cruciform DNA. This chain is Holliday junction branch migration complex subunit RuvA, found in Acidobacterium capsulatum (strain ATCC 51196 / DSM 11244 / BCRC 80197 / JCM 7670 / NBRC 15755 / NCIMB 13165 / 161).